A 338-amino-acid polypeptide reads, in one-letter code: MPIFTAQELAERFNLQLFGDGNIRIHGVATLAQASPEQLSFLANPRYLTQLLNSRAGVIVLHADDVKAASGTVLIAKDPYVTFAKIATLFDIKPAREAGIHPLATVDPSAHVSPTAHVGAFVSIGARSSIGASCIIGTGSIIGDDCTIDDGSELIARVTLISRVRLGKRVRIHPGAVLGGEGFGLAMESGHWIKIPQLGGVVIGDDCEIGANSCIDRGALDDTVLEEDVHIDNLVQIAHNCRIGAHTAIAGCTGIAGSAKIGRYCLLGGHVGVVGHLQICDNVVITGKSVVRNSIHTPGEYSSGTPLTDNRTWRKNAVRFKQLDMLVRRMMAVSKEKA.

His-239 acts as the Proton acceptor in catalysis.

It belongs to the transferase hexapeptide repeat family. LpxD subfamily. Homotrimer.

It catalyses the reaction a UDP-3-O-[(3R)-3-hydroxyacyl]-alpha-D-glucosamine + a (3R)-hydroxyacyl-[ACP] = a UDP-2-N,3-O-bis[(3R)-3-hydroxyacyl]-alpha-D-glucosamine + holo-[ACP] + H(+). The protein operates within bacterial outer membrane biogenesis; LPS lipid A biosynthesis. Catalyzes the N-acylation of UDP-3-O-acylglucosamine using 3-hydroxyacyl-ACP as the acyl donor. Is involved in the biosynthesis of lipid A, a phosphorylated glycolipid that anchors the lipopolysaccharide to the outer membrane of the cell. This is UDP-3-O-acylglucosamine N-acyltransferase from Xylella fastidiosa (strain M12).